Reading from the N-terminus, the 353-residue chain is Protein arginine N-methyltransferase 1 (353 aa).

The 322-residue stretch at 32-353 (KDYYFDSYAH…LSCSTDYRMR (322 aa)) folds into the SAM-dependent MTase PRMT-type domain. S-adenosyl-L-methionine is bound by residues His-45, Arg-54, Gly-78, and Glu-100. Lys-116 bears the N6-succinyllysine mark. Residue Lys-127 forms a Glycyl lysine isopeptide (Lys-Gly) (interchain with G-Cter in ubiquitin) linkage. Glu-129 provides a ligand contact to S-adenosyl-L-methionine. Catalysis depends on residues Glu-144 and Glu-153. Residues Lys-210 and Lys-215 each carry the N6-acetyllysine modification. A phosphoserine mark is found at Ser-286 and Ser-289.

It belongs to the class I-like SAM-binding methyltransferase superfamily. Protein arginine N-methyltransferase family. Homodimer and heterodimer with PRMT8. Homooctamer; individual homodimers associates to form a homooctamer. Interacts with NFATC2IP. Interacts with ILF3 and SUPT5H. Individual homodimers can associate to form a homohexamer. Interacts with FOXO1; the interaction methylates FOXO1, retaining it in the nucleus and increasing its transcriptional activity. Methylation of FOXO1 is increased with oxidative stress. Interacts with CHTOP; the interaction methylates CHTOP, enabling its interaction with the 5FMC complex. Interacts with BTG1, BTG2 and IFNAR1. Interacts with and probably methylates ATXN2L. Component of the methylosome, a 20S complex containing at least CLNS1A/pICln, PRMT5/SKB1, WDR77/MEP50, PRMT1 and ERH. Interacts with DHX9 (via RGG region). Interacts (via N-terminus) with HABP4. Interacts with MAP3K5/ASK1; the interaction results in MAP3K5 methylation by PRMT1 which inhibits MAP3K5 activation. Interacts with TRIM48; the interaction results in ubiquitination of PRMT1 by TRIM48, leading to PRMT1 proteasomal degradation and activation of MAP3K5. Interacts with GATOR1 complex; this interaction is S-adenosyl-L-methionine (SAM) dependent and is perturbated by SAMTOR in a SAM-sensitive manner. Interacts with GFI1; promoting recognition and binding of MRE11 and TP53BP1 substrates by PRMT1. Post-translationally, polyubiquitinated at Lys-127 by the SCF(FBXL17) complex, leading to its subsequent degradation. Ubiquitination is regulated by acetylation at Lys-210 and Lys-215. Polyubiquitinated by E3 ubiquitin-protein ligase TRIM48, leading to suppression of MAP3K5/ASK1 methylation and subsequent MAP3K5 activation. In terms of processing, acetylation at Lys-210 and Lys-215 regulates ubiquitination by the SCF(FBXL17) complex. Acetylated at Lys-215 by p300/EP300. Deacetylated at Lys-210 and Lys-215 by SIRT1. Ubiquitous.

It is found in the nucleus. The protein resides in the nucleoplasm. It localises to the cytoplasm. Its subcellular location is the cytosol. The protein localises to the lysosome membrane. It catalyses the reaction L-arginyl-[protein] + 2 S-adenosyl-L-methionine = N(omega),N(omega)-dimethyl-L-arginyl-[protein] + 2 S-adenosyl-L-homocysteine + 2 H(+). The enzyme catalyses L-arginyl-[protein] + S-adenosyl-L-methionine = N(omega)-methyl-L-arginyl-[protein] + S-adenosyl-L-homocysteine + H(+). The catalysed reaction is N(omega)-methyl-L-arginyl-[protein] + S-adenosyl-L-methionine = N(omega),N(omega)-dimethyl-L-arginyl-[protein] + S-adenosyl-L-homocysteine + H(+). Its function is as follows. Arginine methyltransferase that methylates (mono and asymmetric dimethylation) the guanidino nitrogens of arginyl residues present in proteins such as ESR1, histone H2, H3 and H4, FMR1, ILF3, HNRNPA1, HNRNPD, NFATC2IP, SUPT5H, TAF15, EWS, HABP4, SERBP1, RBM15, FOXO1, CHTOP, MAP3K5/ASK1 and MICU1. Constitutes the main enzyme that mediates monomethylation and asymmetric dimethylation of histone H4 'Arg-3' (H4R3me1 and H4R3me2a, respectively), a specific tag for epigenetic transcriptional activation. May be involved in the regulation of TAF15 transcriptional activity, act as an activator of estrogen receptor (ER)-mediated transactivation, play a key role in neurite outgrowth and act as a negative regulator of megakaryocytic differentiation, by modulating p38 MAPK pathway. Methylates RBM15, promoting ubiquitination and degradation of RBM15. Methylates MRE11 and TP53BP1, promoting the DNA damage response. Methylates FOXO1 and retains it in the nucleus increasing its transcriptional activity. Methylates CHTOP and this methylation is critical for its 5-hydroxymethylcytosine (5hmC)-binding activity. Methylates MAP3K5/ASK1 at 'Arg-85' and 'Arg-87' which promotes association of MAP3K5 with thioredoxin and negatively regulates MAP3K5 association with TRAF2, inhibiting MAP3K5 stimulation and MAP3K5-induced activation of JNK. Methylates H4R3 in genes involved in glioblastomagenesis in a CHTOP- and/or TET1-dependent manner. Plays a role in regulating alternative splicing in the heart. Methylates NPRL2 at 'Arg-78' leading to inhibition of its GTPase activator activity and then the GATOR1 complex and consequently inducing timely mTORC1 activation under methionine-sufficient conditions. This Rattus norvegicus (Rat) protein is Protein arginine N-methyltransferase 1.